Here is a 216-residue protein sequence, read N- to C-terminus: Squamosa promoter-binding-like protein 13 (216 aa).

The disordered stretch occupies residues 32 to 110 (GDGGAALPSP…PSGGGGGPRC (79 aa)). Residues 67 to 91 (SSSAAVAAGASSSSSSSSVAAAARR) show a composition bias toward low complexity. A compositionally biased stretch (gly residues) spans 94 to 108 (GRAGGGAPSGGGGGP). The SBP-type zinc finger occupies 107–184 (GPRCQVERCG…AGHNERRRKS (78 aa)). Zn(2+) is bound by residues cysteine 110, cysteine 115, cysteine 132, histidine 135, cysteine 151, cysteine 154, histidine 158, and cysteine 170. Positions 167–183 (KRSCRRRLAGHNERRRK) match the Bipartite nuclear localization signal motif. A disordered region spans residues 175–216 (AGHNERRRKSAADTAHGENCRHADQDAGRSHQGTGNPPFQIR). Basic and acidic residues predominate over residues 189–203 (AHGENCRHADQDAGR). Positions 205–216 (HQGTGNPPFQIR) are enriched in polar residues.

Ubiquitous.

The protein localises to the nucleus. In terms of biological role, trans-acting factor that binds specifically to the consensus nucleotide sequence 5'-TNCGTACAA-3'. May be involved in panicle development. This chain is Squamosa promoter-binding-like protein 13 (SPL13), found in Oryza sativa subsp. japonica (Rice).